Consider the following 212-residue polypeptide: 3-isopropylmalate dehydratase small subunit (212 aa).

Belongs to the LeuD family. LeuD type 1 subfamily. As to quaternary structure, heterodimer of LeuC and LeuD.

It catalyses the reaction (2R,3S)-3-isopropylmalate = (2S)-2-isopropylmalate. It functions in the pathway amino-acid biosynthesis; L-leucine biosynthesis; L-leucine from 3-methyl-2-oxobutanoate: step 2/4. Its function is as follows. Catalyzes the isomerization between 2-isopropylmalate and 3-isopropylmalate, via the formation of 2-isopropylmaleate. The chain is 3-isopropylmalate dehydratase small subunit from Methylococcus capsulatus (strain ATCC 33009 / NCIMB 11132 / Bath).